A 185-amino-acid polypeptide reads, in one-letter code: NEDD8-conjugating enzyme UBE2F (185 aa).

At Met1 the chain carries N-acetylmethionine. Residues 32 to 185 (VRDKLLVKEV…VDEYIKRYAR (154 aa)) enclose the UBC core domain. Cys116 serves as the catalytic Glycyl thioester intermediate.

It belongs to the ubiquitin-conjugating enzyme family. UBE2F subfamily. Interacts with UBA3 and RBX2. Interacts (N-terminally acetylated form) with (via DCUN1 domain) DCUN1D1, DCUN1D2, DCUN1D3, DCUN1D4 and DCUN1D5. Post-translationally, the acetylation of Met-1 increases affinity for DCUN1D3 by about 2 orders of magnitude and is crucial for NEDD8 transfer to cullins.

It carries out the reaction [E1 NEDD8-activating enzyme]-S-[NEDD8 protein]-yl-L-cysteine + [E2 NEDD8-conjugating enzyme]-L-cysteine = [E1 NEDD8-activating enzyme]-L-cysteine + [E2 NEDD8-conjugating enzyme]-S-[NEDD8-protein]-yl-L-cysteine.. It functions in the pathway protein modification; protein neddylation. Its function is as follows. Accepts the ubiquitin-like protein NEDD8 from the UBA3-NAE1 E1 complex and catalyzes its covalent attachment to other proteins. Together with the E3 ubiquitin ligase RNF7/RBX2, specifically neddylates cullin-5 (CUL5). Does not neddylate CUL1, CUL2, CUL3, CUL4A or CUL4B. Mediates neddylation of the CUL9-RBX1 complex. This Rattus norvegicus (Rat) protein is NEDD8-conjugating enzyme UBE2F (Ube2f).